Reading from the N-terminus, the 278-residue chain is 3-methyl-2-oxobutanoate hydroxymethyltransferase (278 aa).

The Mg(2+) site is built by D43 and D82. Residues D43 to S44, D82, and K112 contribute to the 3-methyl-2-oxobutanoate site. E114 lines the Mg(2+) pocket. Residue E181 is the Proton acceptor of the active site.

It belongs to the PanB family. In terms of assembly, homodecamer; pentamer of dimers. Mg(2+) is required as a cofactor.

Its subcellular location is the cytoplasm. The enzyme catalyses 3-methyl-2-oxobutanoate + (6R)-5,10-methylene-5,6,7,8-tetrahydrofolate + H2O = 2-dehydropantoate + (6S)-5,6,7,8-tetrahydrofolate. Its pathway is cofactor biosynthesis; (R)-pantothenate biosynthesis; (R)-pantoate from 3-methyl-2-oxobutanoate: step 1/2. Catalyzes the reversible reaction in which hydroxymethyl group from 5,10-methylenetetrahydrofolate is transferred onto alpha-ketoisovalerate to form ketopantoate. In Bacillus cereus (strain ATCC 10987 / NRS 248), this protein is 3-methyl-2-oxobutanoate hydroxymethyltransferase.